A 641-amino-acid polypeptide reads, in one-letter code: 1-deoxy-D-xylulose-5-phosphate synthase (641 aa).

Residues histidine 79 and 120–122 contribute to the thiamine diphosphate site; that span reads AHS. Aspartate 151 lines the Mg(2+) pocket. Residues 152–153, asparagine 180, tyrosine 290, and glutamate 372 each bind thiamine diphosphate; that span reads GA. Mg(2+) is bound at residue asparagine 180.

Belongs to the transketolase family. DXPS subfamily. In terms of assembly, homodimer. The cofactor is Mg(2+). Requires thiamine diphosphate as cofactor.

The catalysed reaction is D-glyceraldehyde 3-phosphate + pyruvate + H(+) = 1-deoxy-D-xylulose 5-phosphate + CO2. The protein operates within metabolic intermediate biosynthesis; 1-deoxy-D-xylulose 5-phosphate biosynthesis; 1-deoxy-D-xylulose 5-phosphate from D-glyceraldehyde 3-phosphate and pyruvate: step 1/1. Its function is as follows. Catalyzes the acyloin condensation reaction between C atoms 2 and 3 of pyruvate and glyceraldehyde 3-phosphate to yield 1-deoxy-D-xylulose-5-phosphate (DXP). This Bradyrhizobium sp. (strain ORS 278) protein is 1-deoxy-D-xylulose-5-phosphate synthase.